We begin with the raw amino-acid sequence, 327 residues long: Glycerol-3-phosphate dehydrogenase [NAD(P)+] (327 aa).

NADPH is bound by residues Phe-13, Arg-34, and Lys-107. Residues Lys-107 and Gly-135 each coordinate sn-glycerol 3-phosphate. Position 139 (Ala-139) interacts with NADPH. 5 residues coordinate sn-glycerol 3-phosphate: Lys-190, Asp-243, Ser-253, Arg-254, and Asn-255. Lys-190 (proton acceptor) is an active-site residue. NADPH is bound at residue Arg-254. 2 residues coordinate NADPH: Val-276 and Glu-277.

This sequence belongs to the NAD-dependent glycerol-3-phosphate dehydrogenase family.

It localises to the cytoplasm. The catalysed reaction is sn-glycerol 3-phosphate + NAD(+) = dihydroxyacetone phosphate + NADH + H(+). The enzyme catalyses sn-glycerol 3-phosphate + NADP(+) = dihydroxyacetone phosphate + NADPH + H(+). It participates in membrane lipid metabolism; glycerophospholipid metabolism. Its function is as follows. Catalyzes the reduction of the glycolytic intermediate dihydroxyacetone phosphate (DHAP) to sn-glycerol 3-phosphate (G3P), the key precursor for phospholipid synthesis. The chain is Glycerol-3-phosphate dehydrogenase [NAD(P)+] from Rhizobium johnstonii (strain DSM 114642 / LMG 32736 / 3841) (Rhizobium leguminosarum bv. viciae).